Reading from the N-terminus, the 105-residue chain is UPF0251 protein AF_0666 (105 aa).

This sequence belongs to the UPF0251 family.

This is UPF0251 protein AF_0666 from Archaeoglobus fulgidus (strain ATCC 49558 / DSM 4304 / JCM 9628 / NBRC 100126 / VC-16).